A 1298-amino-acid chain; its full sequence is DNA-directed RNA polymerase subunit beta' (1298 aa).

4 residues coordinate Zn(2+): Cys-60, Cys-62, Cys-75, and Cys-78. Residues Asp-535, Asp-537, and Asp-539 each contribute to the Mg(2+) site. Zn(2+) is bound by residues Cys-877, Cys-954, Cys-961, and Cys-964.

The protein belongs to the RNA polymerase beta' chain family. The RNAP catalytic core consists of 2 alpha, 1 beta, 1 beta' and 1 omega subunit. When a sigma factor is associated with the core the holoenzyme is formed, which can initiate transcription. It depends on Mg(2+) as a cofactor. The cofactor is Zn(2+).

The enzyme catalyses RNA(n) + a ribonucleoside 5'-triphosphate = RNA(n+1) + diphosphate. Its function is as follows. DNA-dependent RNA polymerase catalyzes the transcription of DNA into RNA using the four ribonucleoside triphosphates as substrates. The protein is DNA-directed RNA polymerase subunit beta' of Micrococcus luteus (strain ATCC 4698 / DSM 20030 / JCM 1464 / CCM 169 / CCUG 5858 / IAM 1056 / NBRC 3333 / NCIMB 9278 / NCTC 2665 / VKM Ac-2230) (Micrococcus lysodeikticus).